We begin with the raw amino-acid sequence, 557 residues long: 2-isopropylmalate synthase (557 aa).

One can recognise a Pyruvate carboxyltransferase domain in the interval 33-307 (PIWCSSDLRD…DPQLDFSDID (275 aa)). Residues Asp-42, His-246, His-248, and Asn-282 each contribute to the Mg(2+) site. A regulatory domain region spans residues 439–557 (ANAPYALVSH…SLSQQEAKAA (119 aa)).

Belongs to the alpha-IPM synthase/homocitrate synthase family. LeuA type 2 subfamily. In terms of assembly, homodimer. Requires Mg(2+) as cofactor.

It localises to the cytoplasm. The enzyme catalyses 3-methyl-2-oxobutanoate + acetyl-CoA + H2O = (2S)-2-isopropylmalate + CoA + H(+). It participates in amino-acid biosynthesis; L-leucine biosynthesis; L-leucine from 3-methyl-2-oxobutanoate: step 1/4. In terms of biological role, catalyzes the condensation of the acetyl group of acetyl-CoA with 3-methyl-2-oxobutanoate (2-ketoisovalerate) to form 3-carboxy-3-hydroxy-4-methylpentanoate (2-isopropylmalate). The polypeptide is 2-isopropylmalate synthase (Pseudomonas putida (strain GB-1)).